The primary structure comprises 363 residues: Dihydroorotate dehydrogenase (quinone) (363 aa).

Residues 62-66 (AGFDK) and threonine 86 each bind FMN. Lysine 66 provides a ligand contact to substrate. 111–115 (NRMGF) serves as a coordination point for substrate. The FMN site is built by asparagine 142 and asparagine 175. Asparagine 175 provides a ligand contact to substrate. Serine 178 (nucleophile) is an active-site residue. Asparagine 180 is a binding site for substrate. FMN is bound by residues lysine 216 and threonine 244. 245-246 (NT) provides a ligand contact to substrate. Residues glycine 267, glycine 296, and 317 to 318 (YT) contribute to the FMN site.

This sequence belongs to the dihydroorotate dehydrogenase family. Type 2 subfamily. As to quaternary structure, monomer. FMN is required as a cofactor.

It is found in the cell membrane. It carries out the reaction (S)-dihydroorotate + a quinone = orotate + a quinol. Its pathway is pyrimidine metabolism; UMP biosynthesis via de novo pathway; orotate from (S)-dihydroorotate (quinone route): step 1/1. Functionally, catalyzes the conversion of dihydroorotate to orotate with quinone as electron acceptor. This Anaeromyxobacter sp. (strain Fw109-5) protein is Dihydroorotate dehydrogenase (quinone).